The primary structure comprises 366 residues: Reticulon-4-interacting protein 1, mitochondrial (366 aa).

A mitochondrion-targeting transit peptide spans 1 to 20 (MIEKMILRRFFSTKSSTMRA).

The protein belongs to the zinc-containing alcohol dehydrogenase family. Quinone oxidoreductase subfamily. Expressed in pharynx, muscles and intestine.

Its subcellular location is the mitochondrion. In terms of biological role, plays a role in oxygen metabolism in the mitochondria by regulating the levels of reactive oxygen species (ROS) thereby conferring resistance to oxidative stress. Involved in resistance to P.aeruginosa PA14 infection. Regulates lifespan. This Caenorhabditis elegans protein is Reticulon-4-interacting protein 1, mitochondrial.